The chain runs to 424 residues: MDKLVIKGGSRISGTITASGSKNTSLPIIAATLLTGNGTFTLHHIPDLKDIVTFTQLLHHLGAETTYEGNTLKVSSRNVQSLQAPYELVKKMRASIYVLGPMLARFGHARVSLPGGCAFGPRPIDLHLMAMEKLGATITIETGFIDATIPGGKLQGGHITFPISSVGATGNALMAAVLAEGTTTISNAAAEPEIETLCKFLIAMGATIRGTGTTELEIEGCNTLKAIEFKNVFDRIEAGTLLAAAAITGGDITVNGVEPEQMKAVLKKFVHAGCLVETTDNSITLKSPKKLIPTDVTAKPYPAFPTDMQAQWIALMTQAEGSSHITDKVYHERFNHIPELNRLGAHIEIHKNQAIVHGPQQLSGTKVMSTDLRASASLVLAGLVAEGTTEVLRVYHLDRGYEKIEIKLNSLGADISREKYDEFH.

Residue 22 to 23 (KN) participates in phosphoenolpyruvate binding. R93 is a UDP-N-acetyl-alpha-D-glucosamine binding site. C117 serves as the catalytic Proton donor. 2-(S-cysteinyl)pyruvic acid O-phosphothioketal is present on C117. UDP-N-acetyl-alpha-D-glucosamine contacts are provided by residues 122 to 126 (RPIDL), D307, and V329.

It belongs to the EPSP synthase family. MurA subfamily.

The protein resides in the cytoplasm. The enzyme catalyses phosphoenolpyruvate + UDP-N-acetyl-alpha-D-glucosamine = UDP-N-acetyl-3-O-(1-carboxyvinyl)-alpha-D-glucosamine + phosphate. It functions in the pathway cell wall biogenesis; peptidoglycan biosynthesis. In terms of biological role, cell wall formation. Adds enolpyruvyl to UDP-N-acetylglucosamine. The polypeptide is UDP-N-acetylglucosamine 1-carboxyvinyltransferase (Pelodictyon phaeoclathratiforme (strain DSM 5477 / BU-1)).